A 142-amino-acid chain; its full sequence is MAKKVEAYIKLQVAAGMANPSPPVGPALGQHGVNIMEFCKAFNARTESVEKGLPTPVVISVYSDRSFTFITKTPPAAVLLKKAAGVKSGSGRPNSDKVGTVTDSQIQEIAETKAADMTGADIEAMKRSIAGTARSMGLVVEG.

The segment at 84–103 (AGVKSGSGRPNSDKVGTVTD) is disordered.

It belongs to the universal ribosomal protein uL11 family. As to quaternary structure, part of the ribosomal stalk of the 50S ribosomal subunit. Interacts with L10 and the large rRNA to form the base of the stalk. L10 forms an elongated spine to which L12 dimers bind in a sequential fashion forming a multimeric L10(L12)X complex. Post-translationally, one or more lysine residues are methylated.

Functionally, forms part of the ribosomal stalk which helps the ribosome interact with GTP-bound translation factors. This Aliivibrio salmonicida (strain LFI1238) (Vibrio salmonicida (strain LFI1238)) protein is Large ribosomal subunit protein uL11.